Reading from the N-terminus, the 174-residue chain is Large ribosomal subunit protein uL10 (174 aa).

This sequence belongs to the universal ribosomal protein uL10 family. In terms of assembly, part of the ribosomal stalk of the 50S ribosomal subunit. The N-terminus interacts with L11 and the large rRNA to form the base of the stalk. The C-terminus forms an elongated spine to which L12 dimers bind in a sequential fashion forming a multimeric L10(L12)X complex.

Its function is as follows. Forms part of the ribosomal stalk, playing a central role in the interaction of the ribosome with GTP-bound translation factors. This Anaeromyxobacter sp. (strain Fw109-5) protein is Large ribosomal subunit protein uL10.